The sequence spans 752 residues: Complement C2 (752 aa).

An N-terminal signal peptide occupies residues 1-20 (MGPLMVLFCLLFLYPGLADS). Sushi domains are found at residues 22–86 (PSCP…VCKP), 87–146 (VRCP…VCDN), and 149–206 (GHCP…ICRQ). Intrachain disulfides connect Cys24–Cys64, Cys51–Cys84, Cys89–Cys131, Cys117–Cys144, Cys151–Cys191, and Cys177–Cys204. N-linked (GlcNAc...) asparagine glycosylation occurs at Asn29. N-linked (GlcNAc...) asparagine glycosylation occurs at Asn112. The region spanning 254–452 (NLYLLLDCSQ…KALHQVFEHM (199 aa)) is the VWFA domain. Residues 260-264 (DCSQS) carry the MIDAS-like motif motif. Mg(2+)-binding residues include Ser262 and Ser264. 2 N-linked (GlcNAc...) asparagine glycosylation sites follow: Asn290 and Asn333. A Mg(2+)-binding site is contributed by Thr337. Intrachain disulfides connect Cys463–Cys581, Cys492–Cys508, and Cys584–Cys600. In terms of domain architecture, Peptidase S1 spans 464–744 (GVGNMSANAS…MQPWLRQHLG (281 aa)). N-linked (GlcNAc...) asparagine glycosylation is found at Asn467 and Asn471. Residues His507 and Asp561 each act as charge relay system in the active site. Asn621 carries N-linked (GlcNAc...) asparagine glycosylation. Intrachain disulfides connect Cys638-Cys665 and Cys675-Cys705. Ser679 serves as the catalytic Charge relay system.

Belongs to the peptidase S1 family. Serine protease component of the C3 convertase, also named C4bC2b, composed of the serine protease complement C2b and complement C4b. Serine protease component of the C5 convertase, also named C4bC2bC3b, composed of the serine protease complement C2b, complement C3b, as well as complement C4b. Mg(2+) is required as a cofactor. Requires Mn(2+) as cofactor. In terms of processing, cleaved and activated by different proteases depending on the complement pathway to generate complement C2a and serine protease complement C2b chains. Cleaved and activated by C1S following activation by the classical complement system. Cleaved and activated by MASP2 following activation by the lectin complement system. Cleaved and activated by GZMK following activation by the GZMK complement system.

The protein resides in the secreted. It localises to the cell surface. The catalysed reaction is Selective cleavage of Arg-|-Ser bond in complement component C3 alpha-chain to form C3a and C3b, and Arg-|-Xaa bond in complement component C5 alpha-chain to form C5a and C5b.. Its function is as follows. Precursor of the catalytic component of the C3 and C5 convertase complexes, which are part of the complement pathway, a cascade of proteins that leads to phagocytosis and breakdown of pathogens and signaling that strengthens the adaptive immune system. Component C2 is part of the classical, lectin and GZMK complement systems. Functionally, catalytic component of the complement C3 and C5 convertase complexes. Following complement activation, recruited to the surface of pathogens by complement C4b opsonin to form the C3 convertase, or C3b and C4b opsonins to form the C5 convertase. As part of the C3 convertase, cleaves and activate C3 into C3a anaphylatoxin and C3b opsonin, the next components of the complement pathways. As part of the C5 convertase, cleaves and activate C5 into C5a anaphylatoxin and C5b component of the membrane attack complex. The sequence is that of Complement C2 from Pongo pygmaeus (Bornean orangutan).